Reading from the N-terminus, the 293-residue chain is 5'-3' exoribonuclease Rnm (293 aa).

Histidine 17, histidine 19, aspartate 24, histidine 49, glutamate 76, histidine 87, histidine 202, aspartate 259, and histidine 261 together coordinate Mn(2+).

The protein belongs to the PHP family. TrpH/YciV subfamily. Mn(2+) serves as cofactor.

It catalyses the reaction a ribonucleoside 3',5'-bisphosphate + H2O = a ribonucleoside 5'-phosphate + phosphate. Exoribonuclease that catalyzes the last steps of 5S, 16S and 23S rRNA 5'-end maturation. Removes 3 nucleotides (nt) from the 5' end of 5S, 16S and 23S rRNA precursors to generate the mature 5' ends. 5S and 23S rRNA maturation occurs more efficiently and accurately on ribosomal particles as compared to free RNA. Efficiently catalyzes the hydrolysis of the 3'-phosphate from 3',5'-bis-phosphonucleotides as well as the successive hydrolysis of 5'-phosphomononucleotides from the 5'-end of short pieces of RNA and DNA, with no specificity toward the identity of the nucleotide base. Is more efficient at hydrolyzing RNA oligonucleotides than DNA oligonucleotides. This enzyme can also hydrolyze annealed DNA duplexes, albeit at a catalytic efficiency lower than that of the corresponding single-stranded oligonucleotides. The protein is 5'-3' exoribonuclease Rnm of Salmonella typhimurium (strain LT2 / SGSC1412 / ATCC 700720).